Consider the following 245-residue polypeptide: Fibroblast growth factor 3 (245 aa).

The N-terminal stretch at 1–17 is a signal peptide; it reads MGLIWLLLLSLLEPSWP. Asparagine 65 carries N-linked (GlcNAc...) asparagine glycosylation. Disordered stretches follow at residues 137–181 and 195–245; these read GSSG…FLPR and QSSQ…LAVA. The span at 161-173 shows a compositional bias: basic residues; it reads GRPRRGFKTRRTQ. Residues 226–238 are compositionally biased toward polar residues; that stretch reads TLSTRATPSTQLH.

This sequence belongs to the heparin-binding growth factors family. Interacts with FGFR1 and FGFR2. Affinity between fibroblast growth factors (FGFs) and their receptors is increased by heparan sulfate glycosaminoglycans that function as coreceptors. Post-translationally, glycosylated.

It is found in the nucleus. Its subcellular location is the endoplasmic reticulum. The protein resides in the golgi apparatus. Its function is as follows. Plays an important role in the regulation of embryonic development, cell proliferation, and cell differentiation. Required for normal ear development. This is Fibroblast growth factor 3 (Fgf3) from Mus musculus (Mouse).